The following is a 441-amino-acid chain: FAM10 family protein At4g22670 (441 aa).

The interval 41–114 is disordered; it reads KIPTGVHEED…PQKMGDSSVE (74 aa). A compositionally biased stretch (basic and acidic residues) spans 46–55; the sequence is VHEEDKDTKP. Acidic residues-rich tracts occupy residues 61-71 and 78-102; these read EESDDDMDETE and EEEE…EPDN. Phosphoserine occurs at positions 63 and 89. 3 TPR repeats span residues 121 to 156, 158 to 190, and 191 to 224; these read EAAQ…NPTS, IMYG…NPDS, and AKGY…DYDE. Positions 236 to 285 form a coiled coil; the sequence is NAHKLEEHRRKYDRLRKEREDKKAERDRLRRRAEAQAAYDKAKKEEQSSS. Residues 244 to 282 are compositionally biased toward basic and acidic residues; it reads RRKYDRLRKEREDKKAERDRLRRRAEAQAAYDKAKKEEQ. The disordered stretch occupies residues 244–314; that stretch reads RRKYDRLRKE…MPGGFPGGMG (71 aa). The segment covering 289-314 has biased composition (gly residues); sequence SGGGFPGGMPGGFPGGMPGGFPGGMG. Residues 391 to 430 form the STI1 domain; the sequence is DPELMTAFSDPEVMAALQDVMKNPANLAKHQANPKVAPVI.

This sequence belongs to the FAM10 family.

This Arabidopsis thaliana (Mouse-ear cress) protein is FAM10 family protein At4g22670.